The primary structure comprises 363 residues: 3-dehydroquinate synthase (363 aa).

NAD(+) is bound by residues 134–135, lysine 147, and lysine 156; that span reads TT. Zn(2+) contacts are provided by glutamate 189, histidine 254, and histidine 271.

Belongs to the sugar phosphate cyclases superfamily. Dehydroquinate synthase family. Requires Co(2+) as cofactor. Zn(2+) is required as a cofactor. NAD(+) serves as cofactor.

It localises to the cytoplasm. The enzyme catalyses 7-phospho-2-dehydro-3-deoxy-D-arabino-heptonate = 3-dehydroquinate + phosphate. It functions in the pathway metabolic intermediate biosynthesis; chorismate biosynthesis; chorismate from D-erythrose 4-phosphate and phosphoenolpyruvate: step 2/7. Functionally, catalyzes the conversion of 3-deoxy-D-arabino-heptulosonate 7-phosphate (DAHP) to dehydroquinate (DHQ). This Prochlorococcus marinus (strain AS9601) protein is 3-dehydroquinate synthase.